The following is a 40-amino-acid chain: Alpha-conotoxin-like Qc1.4b (40 aa).

Positions 1–19 (SDGRNTAANDKASDLMALR) are excised as a propeptide. 2 disulfides stabilise this stretch: Cys-22–Cys-28 and Cys-23–Cys-36. A lacks the Ser-Xaa-Pro motif that is crucial for potent interaction with nAChR region spans residues 24–26 (PNP). Cys-36 carries the cysteine amide modification. Positions 37-40 (GGGR) are excised as a propeptide.

It belongs to the conotoxin A superfamily. In terms of tissue distribution, expressed by the venom duct.

Its subcellular location is the secreted. Functionally, alpha-conotoxins act on postsynaptic membranes, they bind to the nicotinic acetylcholine receptors (nAChR) and thus inhibit them. Has possibly a distinct nAChR binding mode from other alpha-conotoxins, due to a different three residue motif (lacks the Ser-Xaa-Pro motif). This Conus quercinus (Oak cone) protein is Alpha-conotoxin-like Qc1.4b.